We begin with the raw amino-acid sequence, 310 residues long: Olfactory receptor 4K14 (310 aa).

The Extracellular segment spans residues 1–25 (MDPQNYSLVSEFVLHGLCTSRHLQN). Asparagine 5 carries an N-linked (GlcNAc...) asparagine glycan. A helical transmembrane segment spans residues 26–49 (FFFIFFFGVYVAIMLGNLLILVTV). The Cytoplasmic segment spans residues 50–58 (ISDPCLHSS). The helical transmembrane segment at 59–80 (PMYFLLGNLAFLDMWLASFATP) threads the bilayer. Over 81 to 101 (KMIRDFLSDQKLISFGGCMAQ) the chain is Extracellular. Cysteine 98 and cysteine 190 form a disulfide bridge. The helical transmembrane segment at 102 to 121 (IFFLHFTGGAEMVLLVSMAY) threads the bilayer. Topologically, residues 122-140 (DRYVAICKPLHYMTLMSWQ) are cytoplasmic. A helical membrane pass occupies residues 141 to 159 (TCIRLVLASWVVGFVHSIS). Topologically, residues 160–196 (QVAFTVNLPYCGPNEVDSFFCDLPLVIKLACMDTYVL) are extracellular. A helical transmembrane segment spans residues 197-220 (GIIMISDSGLLSLSCFLLLLISYT). At 221–236 (VILLAIRQRAAGSTSK) the chain is on the cytoplasmic side. The helical transmembrane segment at 237 to 259 (ALSTCSAHIMVVTLFFGPCIFVY) threads the bilayer. Residues 260–270 (VRPFSRFSVDK) lie on the Extracellular side of the membrane. A helical membrane pass occupies residues 271–290 (LLSVFYTIFTPLLNPIIYTL). Residues 291 to 310 (RNEEMKAAMKKLQNRRVTFQ) lie on the Cytoplasmic side of the membrane.

The protein belongs to the G-protein coupled receptor 1 family.

The protein localises to the cell membrane. Functionally, odorant receptor. The protein is Olfactory receptor 4K14 (OR4K14) of Homo sapiens (Human).